The sequence spans 225 residues: Cytidylate kinase (225 aa).

12 to 20 (GPSGAGKGT) is a binding site for ATP.

It belongs to the cytidylate kinase family. Type 1 subfamily.

Its subcellular location is the cytoplasm. The enzyme catalyses CMP + ATP = CDP + ADP. The catalysed reaction is dCMP + ATP = dCDP + ADP. This is Cytidylate kinase from Proteus mirabilis (strain HI4320).